A 461-amino-acid chain; its full sequence is Acetylcholine receptor subunit alpha (461 aa).

The first 24 residues, 1 to 24 (MILCSYWHVGLVLLLFSCCGLVLG), serve as a signal peptide directing secretion. Over 25-234 (SEHETRLVAN…ITYHFIMQRI (210 aa)) the chain is Extracellular. Disulfide bonds link Cys152–Cys166 and Cys216–Cys217. An N-linked (GlcNAc...) asparagine glycan is attached at Asn165. Helical transmembrane passes span 235–259 (PLYF…VFYL), 267–285 (MTLS…LVIV), and 301–320 (YMLF…VVVI). Topologically, residues 321-432 (NTHHRSPSTH…WKYVAMVIDH (112 aa)) are cytoplasmic. A helical membrane pass occupies residues 433-451 (ILLCVFMLICIIGTVSVFA).

It belongs to the ligand-gated ion channel (TC 1.A.9) family. Acetylcholine receptor (TC 1.A.9.1) subfamily. Alpha-1/CHRNA1 sub-subfamily. Pentamer of two alpha chains, and one each of the beta, delta, and gamma chains.

The protein localises to the postsynaptic cell membrane. It localises to the cell membrane. The catalysed reaction is K(+)(in) = K(+)(out). It carries out the reaction Na(+)(in) = Na(+)(out). In terms of biological role, upon acetylcholine binding, the AChR responds by an extensive change in conformation that affects all subunits and leads to opening of an ion-conducting channel across the plasma membrane. In Torpedo marmorata (Marbled electric ray), this protein is Acetylcholine receptor subunit alpha (CHRNA1).